The chain runs to 123 residues: uncharacterized protein (123 aa).

The tract at residues 1-24 (MGGGGPPARVQGTEGSQTGGGAVA) is disordered.

This is an uncharacterized protein from Halorubrum pleomorphic virus 1 (HRPV-1).